The following is a 209-amino-acid chain: Urease accessory protein UreG (209 aa).

Residue 14-21 coordinates GTP; the sequence is GPVGSGKT.

Belongs to the SIMIBI class G3E GTPase family. UreG subfamily. Homodimer. UreD, UreF and UreG form a complex that acts as a GTP-hydrolysis-dependent molecular chaperone, activating the urease apoprotein by helping to assemble the nickel containing metallocenter of UreC. The UreE protein probably delivers the nickel.

It localises to the cytoplasm. Facilitates the functional incorporation of the urease nickel metallocenter. This process requires GTP hydrolysis, probably effectuated by UreG. This Rhodopseudomonas palustris (strain ATCC BAA-98 / CGA009) protein is Urease accessory protein UreG.